The following is a 614-amino-acid chain: Dihydroxy-acid dehydratase (614 aa).

Asp81 lines the Mg(2+) pocket. [2Fe-2S] cluster is bound at residue Cys122. The Mg(2+) site is built by Asp123 and Lys124. Residue Lys124 is modified to N6-carboxylysine. Residue Cys193 participates in [2Fe-2S] cluster binding. Position 489 (Glu489) interacts with Mg(2+). Ser515 serves as the catalytic Proton acceptor.

It belongs to the IlvD/Edd family. As to quaternary structure, homodimer. [2Fe-2S] cluster is required as a cofactor. It depends on Mg(2+) as a cofactor.

The catalysed reaction is (2R)-2,3-dihydroxy-3-methylbutanoate = 3-methyl-2-oxobutanoate + H2O. The enzyme catalyses (2R,3R)-2,3-dihydroxy-3-methylpentanoate = (S)-3-methyl-2-oxopentanoate + H2O. The protein operates within amino-acid biosynthesis; L-isoleucine biosynthesis; L-isoleucine from 2-oxobutanoate: step 3/4. Its pathway is amino-acid biosynthesis; L-valine biosynthesis; L-valine from pyruvate: step 3/4. Functionally, functions in the biosynthesis of branched-chain amino acids. Catalyzes the dehydration of (2R,3R)-2,3-dihydroxy-3-methylpentanoate (2,3-dihydroxy-3-methylvalerate) into 2-oxo-3-methylpentanoate (2-oxo-3-methylvalerate) and of (2R)-2,3-dihydroxy-3-methylbutanoate (2,3-dihydroxyisovalerate) into 2-oxo-3-methylbutanoate (2-oxoisovalerate), the penultimate precursor to L-isoleucine and L-valine, respectively. This Cellvibrio japonicus (strain Ueda107) (Pseudomonas fluorescens subsp. cellulosa) protein is Dihydroxy-acid dehydratase.